Consider the following 219-residue polypeptide: Large ribosomal subunit protein uL4 (219 aa).

Residues 43 to 100 (AAKRQGTHSTKTRGEVSGGGKKPYRQKGTGRARQGSTRAPQFTGGGTVHGPQPRDYSQ) form a disordered region.

The protein belongs to the universal ribosomal protein uL4 family. As to quaternary structure, part of the 50S ribosomal subunit.

In terms of biological role, one of the primary rRNA binding proteins, this protein initially binds near the 5'-end of the 23S rRNA. It is important during the early stages of 50S assembly. It makes multiple contacts with different domains of the 23S rRNA in the assembled 50S subunit and ribosome. Forms part of the polypeptide exit tunnel. This Mycobacterium sp. (strain JLS) protein is Large ribosomal subunit protein uL4.